A 305-amino-acid polypeptide reads, in one-letter code: HTH-type transcriptional regulator KdgR (305 aa).

The region spanning 55–116 (VSSVLKVFGI…GESEKYSLTL (62 aa)) is the HTH iclR-type domain. A DNA-binding region (H-T-H motif) is located at residues 76-95 (ITELSQRVMMSKSTVYRFLQ). The IclR-ED domain occupies 131-300 (LIRSADIQMR…ARNISDQMGY (170 aa)).

In terms of assembly, homodimer.

Its subcellular location is the cytoplasm. In terms of biological role, transcriptional repressor that negatively regulates the expression of genes involved in pectinolysis and in pectinase secretion. Controls genes involved in pectin catabolism, including the pectinase genes (pelA, pelB, pelC, pelE), genes involved in pectin catabolism (kdgT, ogl, kduI-kdgF) and the outT gene involved in pectinase secretion. Acts by binding directly to KdgR binding sites (KdgR-box) in the gene operator/promoter region. The protein is HTH-type transcriptional regulator KdgR of Dickeya chrysanthemi (Pectobacterium chrysanthemi).